Here is a 291-residue protein sequence, read N- to C-terminus: Lysosomal amino acid transporter 1 homolog (291 aa).

The Lumenal segment spans residues 1–37; that stretch reads MVWKKLGSRNFSSCPSGSIQWIWDVLGECAQDGWDEA. N-linked (GlcNAc...) asparagine glycosylation is present at Asn-10. The region spanning 34 to 100 is the PQ-loop 1 domain; sequence WDEASVGLGL…LADQLPLQTY (67 aa). The helical transmembrane segment at 38-58 threads the bilayer; that stretch reads SVGLGLISILCFAASTFPQFI. The Cytoplasmic portion of the chain corresponds to 59–71; the sequence is KAYKTGNMDQALS. The helical transmembrane segment at 72–92 threads the bilayer; the sequence is LWFLLGWIGGDSCNLIGSFLA. Residues 93 to 98 are Lumenal-facing; the sequence is DQLPLQ. A helical transmembrane segment spans residues 99-119; it reads TYTAVYYVLADLVMLTLYFYY. Topologically, residues 120–134 are cytoplasmic; that stretch reads KFRTRPSLLSAPINS. The helical transmembrane segment at 135–155 threads the bilayer; the sequence is VLLFLMGMACATPLLSAAGPV. The Lumenal segment spans residues 156–182; that stretch reads AAPREAFRGRALLSVESGSKPFTRQEV. Residues 183 to 203 traverse the membrane as a helical segment; it reads IGFVIGSISSVLYLLSRLPQI. The 60-residue stretch at 184 to 243 folds into the PQ-loop 2 domain; it reads GFVIGSISSVLYLLSRLPQIRTNFLRKSTQGISYSLFALVMLGNTLYGLSVLLKNPEEGQ. The Cytoplasmic portion of the chain corresponds to 204-214; the sequence is RTNFLRKSTQG. Residues 215 to 235 form a helical membrane-spanning segment; it reads ISYSLFALVMLGNTLYGLSVL. Residues 236-254 lie on the Lumenal side of the membrane; it reads LKNPEEGQSEGSYLLHHLP. The helical transmembrane segment at 255 to 275 threads the bilayer; that stretch reads WLVGSLGVLLLDTIISIQFLV. The Cytoplasmic segment spans residues 276-291; sequence YRRSTAASELEPLLPS. The Di-leucine motif motif lies at 288–289; that stretch reads LL.

It belongs to the laat-1 family.

It localises to the lysosome membrane. Functionally, amino acid transporter that specifically mediates the pH-dependent export of the cationic amino acids arginine, histidine and lysine from lysosomes. The chain is Lysosomal amino acid transporter 1 homolog from Homo sapiens (Human).